The sequence spans 407 residues: Transmembrane protein 184B (407 aa).

Positions 1–24 (MTVRGAALAPDPASPTTAAASPSI) are disordered. 7 helical membrane-spanning segments follow: residues 40–60 (FLMT…ALLI), 84–104 (ILFI…FFTN), 121–141 (LVIY…SSIM), 178–198 (LQFC…QAFG), 214–234 (VTII…LFYF), 249–269 (FFMV…LAIL), and 290–310 (VAAG…ALAL). The interval 369–395 (TLEPGPTWRGGAHGLSRSHSLSGARDN) is disordered. Phosphoserine is present on residues S388, S402, and S403.

This sequence belongs to the TMEM184 family.

The protein resides in the membrane. Functionally, may activate the MAP kinase signaling pathway. The chain is Transmembrane protein 184B (TMEM184B) from Bos taurus (Bovine).